The following is a 227-amino-acid chain: ATP-dependent dethiobiotin synthetase BioD (227 aa).

13–18 (DIGKTY) is a binding site for ATP. Thr17 is a binding site for Mg(2+). Residue Lys38 is part of the active site. Ser42 is a binding site for substrate. ATP contacts are provided by residues Asp55, 116 to 119 (EGSG), and 179 to 180 (NN). Residues Asp55 and Glu116 each coordinate Mg(2+).

This sequence belongs to the dethiobiotin synthetase family. Homodimer. It depends on Mg(2+) as a cofactor.

It localises to the cytoplasm. The enzyme catalyses (7R,8S)-7,8-diammoniononanoate + CO2 + ATP = (4R,5S)-dethiobiotin + ADP + phosphate + 3 H(+). It functions in the pathway cofactor biosynthesis; biotin biosynthesis; biotin from 7,8-diaminononanoate: step 1/2. Functionally, catalyzes a mechanistically unusual reaction, the ATP-dependent insertion of CO2 between the N7 and N8 nitrogen atoms of 7,8-diaminopelargonic acid (DAPA, also called 7,8-diammoniononanoate) to form a ureido ring. This chain is ATP-dependent dethiobiotin synthetase BioD, found in Clostridium botulinum (strain Loch Maree / Type A3).